A 313-amino-acid chain; its full sequence is MDYLLSLIGSLLLVICVMVGVAFLTLLERKVLGYIQIRKGPNKVGFMGLLQPFSDAVKLFTKEQTYPLLSNYIFYYFSPIFSLFLSLLIWMSMPYLIKLYSFNLGVLFFLCITSLGVYTVMVAGWSSNSNYALLGGLRAVAQTISYEVSLALILLSFIFLIGNYNFLNFFMYQKYMWFIVFCFPLGLVWFASCLAETNRTPFDFAEGESELVSGFNVEYSSGGFALIFLAEYSSILFMSMLFSVIFLGSDIYSILFFFKLTIISFFFIWVRGTLPRFRYDKLMYLAWKSFLPMSLNYLFFFIGVKIFILSMLF.

A run of 8 helical transmembrane segments spans residues 7 to 27, 73 to 93, 104 to 124, 150 to 170, 175 to 195, 226 to 246, 250 to 270, and 293 to 313; these read LIGS…LTLL, IFYY…WMSM, LGVL…MVAG, LALI…LNFF, YMWF…SCLA, LIFL…SVIF, DIYS…FIWV, and MSLN…SMLF.

This sequence belongs to the complex I subunit 1 family.

Its subcellular location is the mitochondrion inner membrane. It catalyses the reaction a ubiquinone + NADH + 5 H(+)(in) = a ubiquinol + NAD(+) + 4 H(+)(out). Core subunit of the mitochondrial membrane respiratory chain NADH dehydrogenase (Complex I) that is believed to belong to the minimal assembly required for catalysis. Complex I functions in the transfer of electrons from NADH to the respiratory chain. The immediate electron acceptor for the enzyme is believed to be ubiquinone. This Aedes aegypti (Yellowfever mosquito) protein is NADH-ubiquinone oxidoreductase chain 1.